Reading from the N-terminus, the 159-residue chain is Small ribosomal subunit protein uS4 (159 aa).

The region spanning 106 to 158 (RRLQTIVYRMGLAKSIYHARQLIVHGHIAVAGRRVSSPGFLVPRELEDKISLI) is the S4 RNA-binding domain.

This sequence belongs to the universal ribosomal protein uS4 family. As to quaternary structure, part of the 30S ribosomal subunit. Contacts protein S5. The interaction surface between S4 and S5 is involved in control of translational fidelity.

In terms of biological role, one of the primary rRNA binding proteins, it binds directly to 16S rRNA where it nucleates assembly of the body of the 30S subunit. Its function is as follows. With S5 and S12 plays an important role in translational accuracy. The chain is Small ribosomal subunit protein uS4 from Pyrobaculum neutrophilum (strain DSM 2338 / JCM 9278 / NBRC 100436 / V24Sta) (Thermoproteus neutrophilus).